The following is a 435-amino-acid chain: Glycine reductase complex component B subunit gamma (435 aa).

Sec350 is a catalytic residue. Residue Sec350 is a non-standard amino acid, selenocysteine.

It belongs to the GrdB/GrdF/GrdH family. As to quaternary structure, heterohexamer of two alpha, two beta and two gamma subunits. Component of the glycine reductase complex, together with components A and C. PB is substrate specific.

It carries out the reaction acetyl phosphate + [thioredoxin]-disulfide + NH4(+) + H2O = [thioredoxin]-dithiol + glycine + phosphate + H(+). In terms of biological role, in the first step of glycine reductase, the substrate is bound to component PB via a Schiff base intermediate. Then the PB-activated substrate is nucleophilically attacked by the selenol anion of component PA to transform it to a carboxymethylated selenoether and the respective amine. By action of component PC, acetyl phosphate is formed, leaving component PA in its oxidized state. Finally component PA becomes reduced by the thioredoxin system to start a new catalytic cycle of reductive deamination. The protein is Glycine reductase complex component B subunit gamma (grdB) of Carboxydothermus hydrogenoformans (strain ATCC BAA-161 / DSM 6008 / Z-2901).